A 76-amino-acid chain; its full sequence is ATP synthase subunit 9, mitochondrial (76 aa).

The next 2 helical transmembrane spans lie at 14-34 (ISTIGLIGAGIGIGIVFAALI) and 56-76 (ALSEATGLFCLMISFMLLFAV).

The protein belongs to the ATPase C chain family. In terms of assembly, F-type ATPases have 2 components, CF(1) - the catalytic core - and CF(0) - the membrane proton channel. CF(1) has five subunits: alpha(3), beta(3), gamma(1), delta(1), epsilon(1). CF(0) has three main subunits: a, b and c.

The protein localises to the mitochondrion membrane. Mitochondrial membrane ATP synthase (F(1)F(0) ATP synthase or Complex V) produces ATP from ADP in the presence of a proton gradient across the membrane which is generated by electron transport complexes of the respiratory chain. F-type ATPases consist of two structural domains, F(1) - containing the extramembraneous catalytic core and F(0) - containing the membrane proton channel, linked together by a central stalk and a peripheral stalk. During catalysis, ATP synthesis in the catalytic domain of F(1) is coupled via a rotary mechanism of the central stalk subunits to proton translocation. Part of the complex F(0) domain. A homomeric c-ring of probably 10 subunits is part of the complex rotary element. The sequence is that of ATP synthase subunit 9, mitochondrial (ATP9) from Candida glabrata (strain ATCC 2001 / BCRC 20586 / JCM 3761 / NBRC 0622 / NRRL Y-65 / CBS 138) (Yeast).